Reading from the N-terminus, the 156-residue chain is Cyanate hydratase (156 aa).

Catalysis depends on residues Arg96, Glu99, and Ser122.

Belongs to the cyanase family.

It catalyses the reaction cyanate + hydrogencarbonate + 3 H(+) = NH4(+) + 2 CO2. Catalyzes the reaction of cyanate with bicarbonate to produce ammonia and carbon dioxide. The sequence is that of Cyanate hydratase from Pseudomonas aeruginosa (strain LESB58).